Here is a 487-residue protein sequence, read N- to C-terminus: MAEIRKLKNYINGEWVESKTDQYEDVVNPATKEVLCQVPISTKEDIDYAAQTAAEAFKTWSKVAVPRRARILFNFQQLLSQHKEELAHLITIENGKNTKEALGEVGRGIENVEFAAGAPSLMMGDSLASIATDVEAANYRYPIGVVGGIAPFNFPMMVPCWMFPMAIALGNTFILKPSERTPLLTEKLVELFEKAGLPKGVFNVVYGAHDVVNGILEHPEIKAISFVGSKPVGEYVYKKGSENLKRVQSLTGAKNHTIVLNDANLEDTVTNIVGAAFGSAGERCMACAVVTVEEGIADEFMAKLQEKVADIKIGNGLDDGVFLGPVIREDNKKRTLSYIEKGLEEGARLVCDGRENVSDDGYFVGPTIFDNVTTEMTIWKDEIFAPVLSVIRVKNLKEAIEIANKSEFANGACLFTSNSNAIRYFRENIDAGMLGINLGVPAPMAFFPFSGWKSSFFGTLHANGKDSVDFYTRKKVVTARYPAPDFN.

NAD(+) contacts are provided by Ala-150, Phe-152, Lys-176, Glu-179, Arg-180, Ser-229, and Thr-251. The active-site Nucleophile is Cys-284. Position 382 (Glu-382) interacts with NAD(+).

Belongs to the aldehyde dehydrogenase family. IolA subfamily. In terms of assembly, homotetramer.

It catalyses the reaction 3-oxopropanoate + NAD(+) + CoA + H2O = hydrogencarbonate + acetyl-CoA + NADH + H(+). It carries out the reaction 2-methyl-3-oxopropanoate + NAD(+) + CoA + H2O = propanoyl-CoA + hydrogencarbonate + NADH + H(+). It participates in polyol metabolism; myo-inositol degradation into acetyl-CoA; acetyl-CoA from myo-inositol: step 7/7. Catalyzes the oxidation of malonate semialdehyde (MSA) and methylmalonate semialdehyde (MMSA) into acetyl-CoA and propanoyl-CoA, respectively. Is involved in a myo-inositol catabolic pathway. Bicarbonate, and not CO2, is the end-product of the enzymatic reaction. In Bacillus subtilis (strain 168), this protein is Malonate-semialdehyde dehydrogenase.